Consider the following 821-residue polypeptide: DNA ligase (821 aa).

Residues 50–54 (DAEYD), 99–100 (SL), and glutamate 140 each bind NAD(+). Lysine 142 functions as the N6-AMP-lysine intermediate in the catalytic mechanism. 4 residues coordinate NAD(+): arginine 163, glutamate 200, lysine 319, and lysine 343. Zn(2+) is bound by residues cysteine 452, cysteine 455, cysteine 470, and cysteine 476. The BRCT domain maps to 742 to 821 (AAALPLEGKT…AGLQALLAGN (80 aa)).

Belongs to the NAD-dependent DNA ligase family. LigA subfamily. Requires Mg(2+) as cofactor. Mn(2+) serves as cofactor.

It catalyses the reaction NAD(+) + (deoxyribonucleotide)n-3'-hydroxyl + 5'-phospho-(deoxyribonucleotide)m = (deoxyribonucleotide)n+m + AMP + beta-nicotinamide D-nucleotide.. In terms of biological role, DNA ligase that catalyzes the formation of phosphodiester linkages between 5'-phosphoryl and 3'-hydroxyl groups in double-stranded DNA using NAD as a coenzyme and as the energy source for the reaction. It is essential for DNA replication and repair of damaged DNA. In Chromobacterium violaceum (strain ATCC 12472 / DSM 30191 / JCM 1249 / CCUG 213 / NBRC 12614 / NCIMB 9131 / NCTC 9757 / MK), this protein is DNA ligase.